We begin with the raw amino-acid sequence, 275 residues long: 3-methyl-2-oxobutanoate hydroxymethyltransferase (275 aa).

Positions 49 and 88 each coordinate Mg(2+). 3-methyl-2-oxobutanoate-binding positions include 49–50, Asp-88, and Lys-118; that span reads DS. Glu-120 is a Mg(2+) binding site. Glu-187 serves as the catalytic Proton acceptor.

This sequence belongs to the PanB family. In terms of assembly, homodecamer; pentamer of dimers. Requires Mg(2+) as cofactor.

It is found in the cytoplasm. It carries out the reaction 3-methyl-2-oxobutanoate + (6R)-5,10-methylene-5,6,7,8-tetrahydrofolate + H2O = 2-dehydropantoate + (6S)-5,6,7,8-tetrahydrofolate. The protein operates within cofactor biosynthesis; (R)-pantothenate biosynthesis; (R)-pantoate from 3-methyl-2-oxobutanoate: step 1/2. Its function is as follows. Catalyzes the reversible reaction in which hydroxymethyl group from 5,10-methylenetetrahydrofolate is transferred onto alpha-ketoisovalerate to form ketopantoate. This is 3-methyl-2-oxobutanoate hydroxymethyltransferase from Bartonella henselae (strain ATCC 49882 / DSM 28221 / CCUG 30454 / Houston 1) (Rochalimaea henselae).